The primary structure comprises 172 residues: Ribosome maturation factor RimM (172 aa).

A PRC barrel domain is found at 99–171 (DDIPTWNYFI…LLTVEVPDGL (73 aa)).

Belongs to the RimM family. As to quaternary structure, binds ribosomal protein uS19.

It is found in the cytoplasm. Functionally, an accessory protein needed during the final step in the assembly of 30S ribosomal subunit, possibly for assembly of the head region. Essential for efficient processing of 16S rRNA. May be needed both before and after RbfA during the maturation of 16S rRNA. It has affinity for free ribosomal 30S subunits but not for 70S ribosomes. The sequence is that of Ribosome maturation factor RimM from Phocaeicola vulgatus (strain ATCC 8482 / DSM 1447 / JCM 5826 / CCUG 4940 / NBRC 14291 / NCTC 11154) (Bacteroides vulgatus).